Consider the following 269-residue polypeptide: Tryptophan synthase alpha chain (269 aa).

Catalysis depends on proton acceptor residues glutamate 49 and aspartate 60.

It belongs to the TrpA family. Tetramer of two alpha and two beta chains.

It carries out the reaction (1S,2R)-1-C-(indol-3-yl)glycerol 3-phosphate + L-serine = D-glyceraldehyde 3-phosphate + L-tryptophan + H2O. It participates in amino-acid biosynthesis; L-tryptophan biosynthesis; L-tryptophan from chorismate: step 5/5. Functionally, the alpha subunit is responsible for the aldol cleavage of indoleglycerol phosphate to indole and glyceraldehyde 3-phosphate. In Photobacterium profundum (strain SS9), this protein is Tryptophan synthase alpha chain.